The chain runs to 200 residues: CASP-like protein 1U2 (200 aa).

The Cytoplasmic segment spans residues Met-1 to Asn-33. A helical membrane pass occupies residues Phe-34–Ser-54. The Extracellular segment spans residues Thr-55 to Trp-77. Residues Leu-78–Phe-98 traverse the membrane as a helical segment. The Cytoplasmic segment spans residues Ser-99–Asp-120. A helical membrane pass occupies residues Phe-121 to Ala-141. At Arg-142–Gln-168 the chain is on the extracellular side. The chain crosses the membrane as a helical span at residues Gly-169–Ala-189. Over Ser-190–His-200 the chain is Cytoplasmic.

The protein belongs to the Casparian strip membrane proteins (CASP) family. In terms of assembly, homodimer and heterodimers.

It is found in the cell membrane. The chain is CASP-like protein 1U2 from Physcomitrium patens (Spreading-leaved earth moss).